Consider the following 335-residue polypeptide: Atypical chemokine receptor 1 (335 aa).

At 1–62 (MGNCLHPAEL…CNLLDDSALP (62 aa)) the chain is on the extracellular side. Residues Asn-16, Asn-26, and Asn-32 are each glycosylated (N-linked (GlcNAc...) asparagine). Disulfide bonds link Cys-50–Cys-275 and Cys-128–Cys-194. Residues 63–83 (FFILVSVLGILASGTVLFMFF) traverse the membrane as a helical segment. The Cytoplasmic segment spans residues 84 to 94 (RPLFHWQLCPG). The helical transmembrane segment at 95-115 (WPVLAQLAVGSALFSIVVPIL) threads the bilayer. Residues 116–128 (APGLGNTRSSALC) are Extracellular-facing. A helical membrane pass occupies residues 129–152 (SLGYCVWYGSAFAQALLLGCHASL). Residues 153-165 (GPKLGAGQVPGLT) lie on the Cytoplasmic side of the membrane. The chain crosses the membrane as a helical span at residues 166–186 (LGLSVGLWGVAALLTLPITLA). Residues 187–206 (SGASGGLCTPAYSMELKALQ) lie on the Extracellular side of the membrane. Residues 207–227 (ATHAVACLAVFVLLPLGLFGA) form a helical membrane-spanning segment. The Cytoplasmic portion of the chain corresponds to 228–243 (KGLKKALGMGPGPWMN). The chain crosses the membrane as a helical span at residues 244–264 (ILWAWFIFWWPHGVVLGLDFL). Over 265 to 286 (VRSKLLLLSTCLAQQALDLLLN) the chain is Extracellular. Residues 287 to 307 (LAEALAILHCVATPLLLALFC) form a helical membrane-spanning segment. The Cytoplasmic portion of the chain corresponds to 308–335 (HQATRTLLPSLPLPEGWSSHLDTLGSES).

The protein belongs to the G-protein coupled receptor 1 family. Atypical chemokine receptor subfamily. (Microbial infection) Interacts (via N-terminal extracellular domain) with Plasmodium knowlesi Duffy receptor alpha form (DBPalpha) (via region II).

The protein resides in the early endosome. Its subcellular location is the recycling endosome. The protein localises to the membrane. In terms of biological role, atypical chemokine receptor that controls chemokine levels and localization via high-affinity chemokine binding that is uncoupled from classic ligand-driven signal transduction cascades, resulting instead in chemokine sequestration, degradation, or transcytosis. Also known as interceptor (internalizing receptor) or chemokine-scavenging receptor or chemokine decoy receptor. Has a promiscuous chemokine-binding profile, interacting with inflammatory chemokines of both the CXC and the CC subfamilies but not with homeostatic chemokines. Acts as a receptor for chemokines including CCL2, CCL5, CCL7, CCL11, CCL13, CCL14, CCL17, CXCL5, CXCL6, IL8/CXCL8, CXCL11, GRO, RANTES, MCP-1 and TARC. May regulate chemokine bioavailability and, consequently, leukocyte recruitment through two distinct mechanisms: when expressed in endothelial cells, it sustains the abluminal to luminal transcytosis of tissue-derived chemokines and their subsequent presentation to circulating leukocytes; when expressed in erythrocytes, serves as blood reservoir of cognate chemokines but also as a chemokine sink, buffering potential surges in plasma chemokine levels. Functionally, (Microbial infection) Acts as a receptor for the malaria parasite Plasmodium knowlesi. In Macaca mulatta (Rhesus macaque), this protein is Atypical chemokine receptor 1 (ACKR1).